Consider the following 325-residue polypeptide: Pyruvate dehydrogenase E1 component subunit beta (325 aa).

Glu60 contacts thiamine diphosphate.

As to quaternary structure, heterodimer of an alpha and a beta chain. The cofactor is thiamine diphosphate.

The enzyme catalyses N(6)-[(R)-lipoyl]-L-lysyl-[protein] + pyruvate + H(+) = N(6)-[(R)-S(8)-acetyldihydrolipoyl]-L-lysyl-[protein] + CO2. The pyruvate dehydrogenase complex catalyzes the overall conversion of pyruvate to acetyl-CoA and CO(2). It contains multiple copies of three enzymatic components: pyruvate dehydrogenase (E1), dihydrolipoamide acetyltransferase (E2) and lipoamide dehydrogenase (E3). This chain is Pyruvate dehydrogenase E1 component subunit beta (pdhB), found in Staphylococcus aureus (strain Mu50 / ATCC 700699).